Consider the following 698-residue polypeptide: Serine/alanine racemase (698 aa).

The Cytoplasmic portion of the chain corresponds to 1–10; that stretch reads MKNKGIDQFR. A helical transmembrane segment spans residues 11–31; that stretch reads VIAAMMVVAIHCLPLHYLWPE. Topologically, residues 32 to 42 are extracellular; it reads GDILITLTIFR. The helical transmembrane segment at 43 to 63 threads the bilayer; sequence VAVPFFFMISGYYVFAELAVA. Residues 64–81 lie on the Cytoplasmic side of the membrane; that stretch reads NSYPSRQRVFNFIKKQLK. A helical transmembrane segment spans residues 82-102; sequence VYLLATLMFLPLALYSQTIGF. Over 103–121 the chain is Extracellular; sequence DLPVGTLVQVLLVNGILYH. The helical transmembrane segment at 122 to 142 threads the bilayer; that stretch reads LWYFPALITGSLLLTSLLIHV. Topologically, residues 143–147 are cytoplasmic; it reads SFKKV. Residues 148–168 traverse the membrane as a helical segment; it reads FWLAAGLYLIGLGGDSWFGLI. The Extracellular portion of the chain corresponds to 169-183; it reads QQTPIEPFYTAVFHL. Residues 184–204 form a helical membrane-spanning segment; that stretch reads LDGTRNGIFFTPLFLCLGVLV. At 205-216 the chain is on the cytoplasmic side; that stretch reads RKQSEKRSLSKT. The chain crosses the membrane as a helical span at residues 217–237; it reads ALFFLISLIGLLIESAYLHGF. Residues 238-244 are Extracellular-facing; that stretch reads SIPKHDS. The chain crosses the membrane as a helical span at residues 245–265; sequence MYLFLPVVLFFLFPLILRWHP. Residues 266 to 274 are Cytoplasmic-facing; sequence HRTWKHPGQ. The helical transmembrane segment at 275–295 threads the bilayer; that stretch reads LSLWLYLLHPYTIAGTHFLSQ. At 296-301 the chain is on the extracellular side; sequence KISILQ. A helical transmembrane segment spans residues 302–322; it reads NNLINYLVVLILTIGFICLFL. The Cytoplasmic portion of the chain corresponds to 323 to 698; the sequence is RQKHSWFRHK…IGPRVSARIK (376 aa). The segment at 332–698 is racemase; sequence KQTTPVKRAV…IGPRVSARIK (367 aa). Lys-371 serves as the catalytic Proton acceptor. Residue Lys-371 is modified to N6-(pyridoxal phosphate)lysine. Position 465 (Arg-465) interacts with substrate. Tyr-597 acts as the Proton acceptor in catalysis. Residue Met-646 coordinates substrate.

It in the N-terminal section; belongs to the acyltransferase 3 family. This sequence in the C-terminal section; belongs to the alanine racemase family. In terms of assembly, homodimer. Pyridoxal 5'-phosphate serves as cofactor.

The protein localises to the cell membrane. It carries out the reaction L-alanine = D-alanine. The enzyme catalyses L-serine = D-serine. Its pathway is amino-acid biosynthesis; D-alanine biosynthesis; D-alanine from L-alanine: step 1/1. Functionally, catalyzes the interconversion of L-serine and D-serine, and L-alanine and D-alanine. L-alanine is racemized at a rate that is 14% of that of L-serine. Together with VanC/VanC1 and VanXYC, required for vancomycin resistance in E.gallinarum strain BM4174. This chain is Serine/alanine racemase, found in Enterococcus gallinarum.